Consider the following 97-residue polypeptide: MTASVVRIEDKLYQNRYLVDAGRPHIKVRQHQSPSPNLLALTVVCPAKCYEVNEDGQVEVIADGCMECGTCRVLCEESGDIDWSYPRGGFGVLFKFG.

One can recognise a 4Fe-4S ferredoxin-type domain in the interval 56–86 (GQVEVIADGCMECGTCRVLCEESGDIDWSYP).

This sequence to ferredoxins from P.putida and C.tartarivorum, ferredoxin I from A.vinelandii, ferredoxin II from D.desulfuricans.

In terms of biological role, could be a 3Fe-4S cluster-containing protein. The sequence is that of Ferredoxin-like protein (fixX) from Sinorhizobium fredii (strain NBRC 101917 / NGR234).